Here is a 447-residue protein sequence, read N- to C-terminus: tRNA-2-methylthio-N(6)-dimethylallyladenosine synthase (447 aa).

The MTTase N-terminal domain maps to 1-116 (MYIRTFGCQM…LPDLIKRRRA (116 aa)). [4Fe-4S] cluster is bound by residues Cys8, Cys45, Cys79, Cys153, Cys157, and Cys160. Positions 139-372 (RVDGATAFVS…QALINQQAAA (234 aa)) constitute a Radical SAM core domain. The region spanning 375 to 438 (QGMIGTRQRV…TNSLRGRVAG (64 aa)) is the TRAM domain.

Belongs to the methylthiotransferase family. MiaB subfamily. As to quaternary structure, monomer. The cofactor is [4Fe-4S] cluster.

It is found in the cytoplasm. The enzyme catalyses N(6)-dimethylallyladenosine(37) in tRNA + (sulfur carrier)-SH + AH2 + 2 S-adenosyl-L-methionine = 2-methylsulfanyl-N(6)-dimethylallyladenosine(37) in tRNA + (sulfur carrier)-H + 5'-deoxyadenosine + L-methionine + A + S-adenosyl-L-homocysteine + 2 H(+). In terms of biological role, catalyzes the methylthiolation of N6-(dimethylallyl)adenosine (i(6)A), leading to the formation of 2-methylthio-N6-(dimethylallyl)adenosine (ms(2)i(6)A) at position 37 in tRNAs that read codons beginning with uridine. In Bordetella pertussis (strain Tohama I / ATCC BAA-589 / NCTC 13251), this protein is tRNA-2-methylthio-N(6)-dimethylallyladenosine synthase.